The sequence spans 195 residues: Protein aq_1444 (195 aa).

Positions 1–191 (MDIRELVHLG…EKEPFGEVER (191 aa)) constitute an AMMECR1 domain.

This Aquifex aeolicus (strain VF5) protein is Protein aq_1444.